The sequence spans 311 residues: Porphobilinogen deaminase (311 aa).

The residue at position 240 (Cys-240) is an S-(dipyrrolylmethanemethyl)cysteine.

Belongs to the HMBS family. In terms of assembly, monomer. It depends on dipyrromethane as a cofactor.

It catalyses the reaction 4 porphobilinogen + H2O = hydroxymethylbilane + 4 NH4(+). It functions in the pathway porphyrin-containing compound metabolism; protoporphyrin-IX biosynthesis; coproporphyrinogen-III from 5-aminolevulinate: step 2/4. Tetrapolymerization of the monopyrrole PBG into the hydroxymethylbilane pre-uroporphyrinogen in several discrete steps. The protein is Porphobilinogen deaminase of Natranaerobius thermophilus (strain ATCC BAA-1301 / DSM 18059 / JW/NM-WN-LF).